A 265-amino-acid polypeptide reads, in one-letter code: Type II pantothenate kinase (265 aa).

6-13 (DAGGTLIK) contacts ATP. The Proton acceptor role is filled by Glu-70. ATP is bound by residues Thr-99, 121–125 (GGMIQ), Tyr-137, and Ser-225.

This sequence belongs to the type II pantothenate kinase family. Homodimer.

It is found in the cytoplasm. It catalyses the reaction (R)-pantothenate + ATP = (R)-4'-phosphopantothenate + ADP + H(+). The protein operates within cofactor biosynthesis; coenzyme A biosynthesis; CoA from (R)-pantothenate: step 1/5. Functionally, catalyzes the phosphorylation of pantothenate (Pan), the first step in CoA biosynthesis. The protein is Type II pantothenate kinase of Staphylococcus epidermidis (strain ATCC 35984 / DSM 28319 / BCRC 17069 / CCUG 31568 / BM 3577 / RP62A).